The sequence spans 224 residues: Thymidylate kinase (224 aa).

13–20 contacts ATP; the sequence is GGEGAGKS.

It belongs to the thymidylate kinase family.

It catalyses the reaction dTMP + ATP = dTDP + ADP. Functionally, phosphorylation of dTMP to form dTDP in both de novo and salvage pathways of dTTP synthesis. This Agrobacterium fabrum (strain C58 / ATCC 33970) (Agrobacterium tumefaciens (strain C58)) protein is Thymidylate kinase.